A 1392-amino-acid polypeptide reads, in one-letter code: Condensin complex subunit 1 (1392 aa).

An interaction with SMC2 and SMC4 region spans residues 1 to 593 (MSPHNFEFHL…TGSKDSPSVP (593 aa)). Phosphoserine occurs at positions 20 and 575. 3 disordered regions span residues 569–602 (EASTQDSHGDTDPGLTGSKDSPSVPEPEGSQSND), 945–966 (REEQEHRAKEPKEKTASSETTM), and 1293–1392 (FETG…RHRS). A compositionally biased stretch (basic and acidic residues) spans 945 to 960 (REEQEHRAKEPKEKTA). Serine 1300, serine 1305, serine 1320, and serine 1323 each carry phosphoserine. At threonine 1329 the chain carries Phosphothreonine. The short motif at 1332–1353 (PRRTKPGRPQTQQRKKSQRKAK) is the Bipartite nuclear localization signal element. Residues 1344-1353 (QRKKSQRKAK) show a composition bias toward basic residues. Serine 1358, serine 1361, serine 1362, and serine 1367 each carry phosphoserine. The span at 1360–1373 (ESSEDELSAEMTEE) shows a compositional bias: acidic residues. Threonine 1375 and threonine 1380 each carry phosphothreonine; by CDK1. Serine 1386 bears the Phosphoserine mark.

This sequence belongs to the CND1 (condensin subunit 1) family. As to quaternary structure, component of the condensin complex, which contains the SMC2 and SMC4 heterodimer, and three non SMC subunits that probably regulate the complex: NCAPH/BRRN1, NCAPD2/CAPD2 and NCAPG. Interacts with histones H1 and H3. Post-translationally, phosphorylated by CDK1. Its phosphorylation, as well as that of NCAPH and NCAPG subunits, activates the condensin complex and is required for chromosome condensation.

Its subcellular location is the nucleus. It is found in the cytoplasm. The protein localises to the chromosome. Its function is as follows. Regulatory subunit of the condensin complex, a complex required for conversion of interphase chromatin into mitotic-like condense chromosomes. The condensin complex probably introduces positive supercoils into relaxed DNA in the presence of type I topoisomerases and converts nicked DNA into positive knotted forms in the presence of type II topoisomerases. May target the condensin complex to DNA via its C-terminal domain. May promote the resolution of double-strand DNA catenanes (intertwines) between sister chromatids. Condensin-mediated compaction likely increases tension in catenated sister chromatids, providing directionality for type II topoisomerase-mediated strand exchanges toward chromatid decatenation. Required for decatenation of non-centromeric ultrafine DNA bridges during anaphase. Early in neurogenesis, may play an essential role to ensure accurate mitotic chromosome condensation in neuron stem cells, ultimately affecting neuron pool and cortex size. In Mus musculus (Mouse), this protein is Condensin complex subunit 1 (Ncapd2).